Consider the following 317-residue polypeptide: Ribose-phosphate pyrophosphokinase A (317 aa).

Mg(2+) contacts are provided by D130, H132, and D145. The binding of phosphoribosylpyrophosphate stretch occupies residues K212–G227.

The protein belongs to the ribose-phosphate pyrophosphokinase family. The cofactor is Mg(2+).

The catalysed reaction is D-ribose 5-phosphate + ATP = 5-phospho-alpha-D-ribose 1-diphosphate + AMP + H(+). The protein operates within metabolic intermediate biosynthesis; 5-phospho-alpha-D-ribose 1-diphosphate biosynthesis; 5-phospho-alpha-D-ribose 1-diphosphate from D-ribose 5-phosphate (route I): step 1/1. In Dictyostelium discoideum (Social amoeba), this protein is Ribose-phosphate pyrophosphokinase A (prsA).